The primary structure comprises 2774 residues: Teneurin-2 (2774 aa).

Residues 1 to 375 form the Teneurin N-terminal domain; sequence MDVKDRRHRS…KPSKYCSWKC (375 aa). Residues 1-379 lie on the Cytoplasmic side of the membrane; it reads MDVKDRRHRS…YCSWKCAALS (379 aa). Phosphoserine is present on residues serine 90 and serine 124. Residues 111–271 form a disordered region; the sequence is TGSDADSDTE…HHHSSANSLN (161 aa). The segment covering 141-155 has biased composition (polar residues); sequence SSGLSSRENSALTLT. A Phosphothreonine modification is found at threonine 155. Phosphoserine is present on serine 157. Basic and acidic residues predominate over residues 159–168; that stretch reads NENKSDDDNG. A compositionally biased stretch (low complexity) spans 174–188; it reads TSSSSLLPSAQLPSS. Positions 202–211 are enriched in polar residues; sequence DSNTSHQIMD. Over residues 229-240 the composition is skewed to low complexity; sequence SGPQQASSSGPP. A helical transmembrane segment spans residues 380 to 400; it reads AIAAALLLAILLAYFIAMHLL. At 401-2774 the chain is on the extracellular side; sequence GLNWQLQPAD…FLRQNEMGKR (2374 aa). N-linked (GlcNAc...) asparagine glycans are attached at residues asparagine 443 and asparagine 482. EGF-like domains follow at residues 575–603, 605–634, 636–668, 669–701, 702–735, 738–766, 769–797, and 808–841; these read DCPRNCHGNGECVSGLCHCFPGFLGADCA, AACPVLCSGNGQYSKGTCQCYSGWKGAECD, PMNQCIDPSCGGHGSCIDGNCVCAAGYKGEHCE, EVDCLDPTCSSHGVCVNGECLCSPGWGGLNCEL, ARVQCPDQCSGHGTYLPDSGLCNCDPNWMGPDCS, VCSVDCGTHGVCIGGACRCEEGWTGAACD, VCHPRCIEHGTCKDGKCECREGWNGEHCT, and DGCPDLCNGNGRCTLGQNSWQCVCQTGWRGPGCN. 22 disulfide bridges follow: cysteine 576–cysteine 586, cysteine 580–cysteine 591, cysteine 593–cysteine 602, cysteine 611–cysteine 622, cysteine 624–cysteine 633, cysteine 640–cysteine 651, cysteine 645–cysteine 656, cysteine 658–cysteine 667, cysteine 672–cysteine 683, cysteine 677–cysteine 688, cysteine 690–cysteine 699, cysteine 710–cysteine 723, cysteine 725–cysteine 734, cysteine 739–cysteine 749, cysteine 743–cysteine 754, cysteine 756–cysteine 765, cysteine 770–cysteine 780, cysteine 774–cysteine 785, cysteine 787–cysteine 796, cysteine 810–cysteine 820, cysteine 814–cysteine 829, and cysteine 831–cysteine 840. N-linked (GlcNAc...) asparagine glycosylation is found at asparagine 925, asparagine 948, and asparagine 1267. NHL repeat units lie at residues 1272–1316, 1342–1386, 1401–1452, 1474–1501, and 1530–1573; these read LELR…VKSL, ARCG…NGII, LSCD…IAGR, LESASAIAISHTGVLYITETDEKKINRL, and CYSG…VSKN. One copy of the YD 1 repeat lies at 1583 to 1602; sequence YEAASPGEQELYVFNADGIH. N-linked (GlcNAc...) asparagine glycosylation is present at asparagine 1616. 3 YD repeats span residues 1619–1639, 1682–1701, and 1702–1724; these read YSADNDVTELIDNNGNSLKIR, YDGNTGLLATKSDETGWTTF, and YDYDHEGRLTNVTRPTGVVTSLH. Residues asparagine 1712, asparagine 1749, asparagine 1773, asparagine 1807, and asparagine 1892 are each glycosylated (N-linked (GlcNAc...) asparagine). YD repeat units follow at residues 1895–1914, 1936–1954, 1955–1975, 1982–1999, 2000–2021, 2022–2039, 2042–2062, 2065–2085, 2093–2113, 2119–2136, 2137–2163, 2165–2178, 2179–2202, 2205–2225, 2226–2246, 2248–2268, 2280–2300, and 2302–2322; these read YFFNGRLAGLQRGAMSERTD, YLDKSMVLLLQSQRQYIFE, YDSSDRLHAVTMPSVARHSMS, YIRNIYNPPESNASVIFD, YSDDGRILKTSFLGTGRQVFYK, YGKLSKLSEIVYDSTAVT, YDETTGVLKMVNLQSGGFSCT, YRKVGPLVDKQIYRFSEEGMI, YHDNSFRIASIKPVISETPLP, YDEISGKVEHFGKFGVIY, YDINQIITTAVMTLSKHFDTHGRIKEV, YEMFRSLMYWMTVQ, YDSMGRVIKRELKLGPYANTTKYT, YDGDGQLQSVAVNDRPTWRYS, YDLNGNLHLLNPGNSARLMPL, YDLRDRITRLGDVQYKIDDDG, YNSKGLLTRAYNKASGWSVQY, and YDGVSRRASYKTNLGHHLQYF. N-linked (GlcNAc...) asparagine glycosylation is present at asparagine 1993. Asparagine 2197 is a glycosylation site (N-linked (GlcNAc...) asparagine). N-linked (GlcNAc...) asparagine glycosylation is present at asparagine 2337. The stretch at 2348–2389 is one YD 23 repeat; it reads YDLQGHLFAMESSSGEEYYVASDNTGTPLAVFSINGLMIKQL. N-linked (GlcNAc...) asparagine glycosylation occurs at asparagine 2648.

Belongs to the tenascin family. Teneurin subfamily. In terms of assembly, homodimer; disulfide-linked. Heterodimer with either TENM1 or TENM3. May also form heterodimer with TENM4. Interacts with ADGRL1 isoform 2. Post-translationally, derives from the membrane form by proteolytic processing. In terms of processing, derives from the plasma membrane form by proteolytic cleavage and translocates to the nucleus. Homophilic binding of the C-terminal extracellular domain stimulates its proteolytic cleavage and release in the cytoplasmic. Is subjected to rapid degradation by the proteasome pathway. Expressed in the brain (at protein level).

Its subcellular location is the cell membrane. It localises to the presynaptic cell membrane. The protein resides in the postsynaptic cell membrane. The protein localises to the endoplasmic reticulum. It is found in the golgi apparatus. Its subcellular location is the synapse. It localises to the cell projection. The protein resides in the dendritic spine. The protein localises to the filopodium. It is found in the growth cone. Its subcellular location is the nucleus. It localises to the PML body. In terms of biological role, involved in neural development, regulating the establishment of proper connectivity within the nervous system. Acts as a ligand of the ADGRL1 and ADGRL3 receptors that are expressed at the surface of adjacent cells. Promotes the formation of filopodia and enlarged growth cone in neuronal cells. Mediates axon guidance and homophilic and heterophilic cell-cell adhesion. May function as a cellular signal transducer. Induces gene transcription inhibition. The polypeptide is Teneurin-2 (Tenm2) (Rattus norvegicus (Rat)).